The sequence spans 179 residues: Apoptosis regulator Bcl-2 homolog (179 aa).

A BH1 motif is present at residues 76–95; the sequence is ELFKDLINWGRICGFIVFSA. The BH2 motif lies at 126 to 141; the sequence is PWMISHGGQEEFLAFS.

It belongs to the Bcl-2 family. Interacts with host BECN1 (via BH3 homology domain); this interaction allows the virus to inhibit BECN1, and thus autophagy. Interacts with host BID. Interacts with host BAX.

It is found in the host mitochondrion. It localises to the host endoplasmic reticulum. Suppresses apoptosis in host cell to promote the viral replication. Has the ability to potentially bind to all the members of the proapoptotic Bcl-2 family. Inhibits autophagy by interacting with host Beclin 1 (BECN1). The protein is Apoptosis regulator Bcl-2 homolog of Ornithodoros (relapsing fever ticks).